A 237-amino-acid polypeptide reads, in one-letter code: Ribitol-5-phosphate cytidylyltransferase (237 aa).

Residues 7–10, 81–87, and serine 112 each bind CTP; these read LAGG and GSDRNES.

Belongs to the IspD/TarI cytidylyltransferase family. TarI subfamily.

It carries out the reaction D-ribitol 5-phosphate + CTP + H(+) = CDP-L-ribitol + diphosphate. It participates in cell wall biogenesis; poly(ribitol phosphate) teichoic acid biosynthesis. Its function is as follows. Catalyzes the transfer of the cytidylyl group of CTP to D-ribitol 5-phosphate. The polypeptide is Ribitol-5-phosphate cytidylyltransferase (Bacillus spizizenii (strain ATCC 23059 / NRRL B-14472 / W23) (Bacillus subtilis subsp. spizizenii)).